We begin with the raw amino-acid sequence, 381 residues long: Succinyl-diaminopimelate desuccinylase (381 aa).

Residue His71 coordinates Zn(2+). The active site involves Asp73. Asp104 is a Zn(2+) binding site. Glu138 serves as the catalytic Proton acceptor. Glu139, Glu167, and His353 together coordinate Zn(2+).

This sequence belongs to the peptidase M20A family. DapE subfamily. As to quaternary structure, homodimer. Zn(2+) serves as cofactor. The cofactor is Co(2+).

It carries out the reaction N-succinyl-(2S,6S)-2,6-diaminopimelate + H2O = (2S,6S)-2,6-diaminopimelate + succinate. It participates in amino-acid biosynthesis; L-lysine biosynthesis via DAP pathway; LL-2,6-diaminopimelate from (S)-tetrahydrodipicolinate (succinylase route): step 3/3. Its function is as follows. Catalyzes the hydrolysis of N-succinyl-L,L-diaminopimelic acid (SDAP), forming succinate and LL-2,6-diaminopimelate (DAP), an intermediate involved in the bacterial biosynthesis of lysine and meso-diaminopimelic acid, an essential component of bacterial cell walls. This Shewanella piezotolerans (strain WP3 / JCM 13877) protein is Succinyl-diaminopimelate desuccinylase.